Consider the following 461-residue polypeptide: Type IV secretion system protein PtlD homolog (461 aa).

The signal sequence occupies residues 1–24; sequence MAGLSRILLSCTLACLLAGQAAQA. 5 consecutive transmembrane segments (helical) span residues 118 to 138, 232 to 252, 253 to 273, 294 to 314, and 333 to 353; these read LQPL…YALL, WLLC…LAAS, LLIV…LFLV, ALVF…VLAG, and MLAA…VPLA. Residues 376-411 show a composition bias toward low complexity; sequence AHRQAAARQYAPRPAAAAAAAGPHQAGTYAASATPA. A disordered region spans residues 376–461; the sequence is AHRQAAARQY…RVLPRKPNLP (86 aa). Over residues 439–453 the composition is skewed to basic and acidic residues; it reads VRRDDRPAPAPDRRV.

It is found in the cell membrane. In Bordetella bronchiseptica (strain ATCC BAA-588 / NCTC 13252 / RB50) (Alcaligenes bronchisepticus), this protein is Type IV secretion system protein PtlD homolog (ptlD).